The chain runs to 178 residues: Large ribosomal subunit protein uL6 (178 aa).

This sequence belongs to the universal ribosomal protein uL6 family. Part of the 50S ribosomal subunit.

In terms of biological role, this protein binds to the 23S rRNA, and is important in its secondary structure. It is located near the subunit interface in the base of the L7/L12 stalk, and near the tRNA binding site of the peptidyltransferase center. The chain is Large ribosomal subunit protein uL6 from Streptococcus pneumoniae (strain ATCC 700669 / Spain 23F-1).